Reading from the N-terminus, the 612-residue chain is E3 ubiquitin-protein ligase synoviolin (612 aa).

The Cytoplasmic portion of the chain corresponds to 1–4; it reads MFRT. The interval 1–251 is involved in FAM8A1 interaction; it reads MFRTAVMMAA…LFAIRPMYLA (251 aa). Residues 5 to 25 traverse the membrane as a helical segment; the sequence is AVMMAASLALTGAVVAHAYYL. The interaction with SEL1L stretch occupies residues 21–42; it reads HAYYLKHQFYPTVVYLTKSSPS. The Lumenal portion of the chain corresponds to 26-41; that stretch reads KHQFYPTVVYLTKSSP. The helical transmembrane segment at 42–62 threads the bilayer; the sequence is SMAVLYIQAFVLVFLLGKVMG. Residues 63–98 lie on the Cytoplasmic side of the membrane; the sequence is KVFFGQLRAAEMEHLLERSWYAVTETCLAFTVFRDD. The chain crosses the membrane as a helical span at residues 99–119; the sequence is FSPRFVALFTLLLFLKCFHWL. Topologically, residues 120–140 are lumenal; it reads AEDRVDFMERSPNISWLFHCR. A helical transmembrane segment spans residues 141–161; sequence IVSLMFLLGILDFLFVSHAYH. Over 162-169 the chain is Cytoplasmic; it reads SILTRGAS. Residues 170–190 form a helical membrane-spanning segment; it reads VQLVFGFEYAILMTMVLTIFI. Topologically, residues 191–224 are lumenal; that stretch reads KYVLHSVDLQSENPWDNKAVYMLYTELFTGFIKV. The helical transmembrane segment at 225–245 threads the bilayer; that stretch reads LLYMAFMTIMIKVHTFPLFAI. Residues 236–270 are interaction with p53/TP53; the sequence is KVHTFPLFAIRPMYLAMRQFKKAVTDAIMSRRAIR. Residues 246 to 612 are Cytoplasmic-facing; it reads RPMYLAMRQF…LQKLESPVAH (367 aa). Residues Cys291, Cys294, Cys307, His309, His312, Cys315, Cys326, and Cys329 each coordinate Zn(2+). The segment at 291–330 adopts an RING-type; atypical zinc-finger fold; sequence CIICREEMVTGAKRLPCNHIFHTSCLRSWFQRQQTCPTCR. Disordered regions lie at residues 337–375 and 393–449; these read SLPAQSPPPPEPADQGPPPAPHPQPLLPQPPNFPQGLLP and PVPP…PGFP. 2 stretches are compositionally biased toward pro residues: residues 341–375 and 393–409; these read QSPPPPEPADQGPPPAPHPQPLLPQPPNFPQGLLP and PVPPPPSSGEAAAPPPT. The span at 416-434 shows a compositional bias: low complexity; it reads PSGAATTTAAGTSTSAPAP. The segment covering 435-449 has biased composition (pro residues); the sequence is GSVPGPEAGPAPGFP. An HAF-H domain; necessary to form higher-order Hrd1 complexes region spans residues 474-529; the sequence is GFAGLTPEELRALEGHERQHLEARLQSLRNIHTLLDAAMLQINQYLTVLASLGPPR. A disordered region spans residues 530–612; it reads PATSVNPTEE…LQKLESPVAH (83 aa). A compositionally biased stretch (low complexity) spans 539–559; that stretch reads ETASTVVSAAPSTSAPSSEAP. A compositionally biased stretch (pro residues) spans 560–570; sequence TPSPGASPPIP. Positions 586-595 are enriched in acidic residues; it reads ELPEDGEPDA. A Phosphoserine modification is found at Ser608.

It belongs to the HRD1 family. As to quaternary structure, homodimer. Interacts with p53/TP53. Interacts with HTT. Component of the HRD1 complex, which comprises at least SYNV1/HRD1, DERL1/2, FAM8A1, HERPUD1/HERP, OS9, SEL1L and UBE2J1. FAM8A1 is stabilized by interaction with SYNV1, which prevents its proteasomal degradation. OS9 and UBE2J1 recruitment to the complex may be mediated by SEL1L. SYNV1 assembles with SEL1L and FAM8A1 through its transmembrane domains, but interaction with its cytoplasmic domain is required to confer stability to FAM8A1 and enhance recruitment of HERPUD1. The HRD1 complex also associates with VIMP and may transfer misfolded proteins from the endoplasmic reticulum to VCP. May form a complex with ERLEC1; HSPA5; OS9 and SEL1L. Interacts with VCP. Interacts with UBXN6. Interacts with BAG6. Interacts with NFE2L1. Interacts (via N-terminus) with components of the pre-B cell receptor, including IGLL1 and VPREB1A. Interacts with CREB3L3; this interaction leads to CREB3L3 ubiquitination and proteasomal degradation. In terms of processing, auto-ubiquitinated. Deubiquitinated by USP19. As to expression, widely expressed, with highest levels in bone, spleen, lung and testis. In the brain, present in neurons but not in glial cells. Up-regulated in synovial tissues from mice with collagen-induced arthritis (at protein level). Expressed in the liver.

It is found in the endoplasmic reticulum membrane. It catalyses the reaction S-ubiquitinyl-[E2 ubiquitin-conjugating enzyme]-L-cysteine + [acceptor protein]-L-lysine = [E2 ubiquitin-conjugating enzyme]-L-cysteine + N(6)-ubiquitinyl-[acceptor protein]-L-lysine.. It participates in protein modification; protein ubiquitination. Its function is as follows. E3 ubiquitin-protein ligase which accepts ubiquitin specifically from endoplasmic reticulum-associated UBC7 E2 ligase and transfers it to substrates, promoting their degradation. Component of the endoplasmic reticulum quality control (ERQC) system also called ER-associated degradation (ERAD) involved in ubiquitin-dependent degradation of misfolded endoplasmic reticulum proteins. Also promotes the degradation of normal but naturally short-lived proteins such as SGK. Protects cells from ER stress-induced apoptosis. Sequesters p53/TP53 in the cytoplasm and promotes its degradation, thereby negatively regulating its biological function in transcription, cell cycle regulation and apoptosis. Required for embryogenesis. Mediates the ubiquitination and subsequent degradation of cytoplasmic NFE2L1. During the early stage of B cell development, required for degradation of the pre-B cell receptor (pre-BCR) complex, hence supporting further differentiation into mature B cells. In Mus musculus (Mouse), this protein is E3 ubiquitin-protein ligase synoviolin (Syvn1).